Here is a 492-residue protein sequence, read N- to C-terminus: Ketol-acid reductoisomerase (NADP(+)) (492 aa).

The KARI N-terminal Rossmann domain maps to 14-208 (LDQLGRCRFM…GGHKAGVLES (195 aa)). Residues 45-48 (CGAQ), R68, R76, S78, and 108-110 (DKQ) contribute to the NADP(+) site. H132 is an active-site residue. NADP(+) is bound at residue G158. KARI C-terminal knotted domains are found at residues 209–344 (SFVA…NAPK) and 345–485 (YDGK…MTDM). Residues D217, E221, E389, and E393 each coordinate Mg(2+). S414 is a substrate binding site.

It belongs to the ketol-acid reductoisomerase family. Mg(2+) serves as cofactor.

It carries out the reaction (2R)-2,3-dihydroxy-3-methylbutanoate + NADP(+) = (2S)-2-acetolactate + NADPH + H(+). It catalyses the reaction (2R,3R)-2,3-dihydroxy-3-methylpentanoate + NADP(+) = (S)-2-ethyl-2-hydroxy-3-oxobutanoate + NADPH + H(+). The protein operates within amino-acid biosynthesis; L-isoleucine biosynthesis; L-isoleucine from 2-oxobutanoate: step 2/4. It participates in amino-acid biosynthesis; L-valine biosynthesis; L-valine from pyruvate: step 2/4. In terms of biological role, involved in the biosynthesis of branched-chain amino acids (BCAA). Catalyzes an alkyl-migration followed by a ketol-acid reduction of (S)-2-acetolactate (S2AL) to yield (R)-2,3-dihydroxy-isovalerate. In the isomerase reaction, S2AL is rearranged via a Mg-dependent methyl migration to produce 3-hydroxy-3-methyl-2-ketobutyrate (HMKB). In the reductase reaction, this 2-ketoacid undergoes a metal-dependent reduction by NADPH to yield (R)-2,3-dihydroxy-isovalerate. The chain is Ketol-acid reductoisomerase (NADP(+)) from Haemophilus influenzae (strain PittGG).